A 209-amino-acid polypeptide reads, in one-letter code: MKILIASSHGYKVRETKAFLKKIGEFDIFSLVDYPSYTPPKETGETPEENAIQKGVFAAQTFRCWTIADDSMLIIPALGGLPGKLSASFSGEHASDKDHRKKLLEEMLLLENPIDRSAYFECCVVLVSPFGKIFKAHASCEGTIVFKERGSSGFGYDPLFSKHDYKQTYAELPEEIKNQVSHRAKALAKLQPYVEMAFANHLLARNESL.

7–12 (SSHGYK) is a substrate binding site. Aspartate 70 (proton acceptor) is an active-site residue. Mg(2+) is bound at residue aspartate 70. Substrate contacts are provided by residues serine 71, 154–157 (FGYD), lysine 177, and 182–183 (HR).

It belongs to the HAM1 NTPase family. Homodimer. Requires Mg(2+) as cofactor.

The catalysed reaction is XTP + H2O = XMP + diphosphate + H(+). It carries out the reaction dITP + H2O = dIMP + diphosphate + H(+). It catalyses the reaction ITP + H2O = IMP + diphosphate + H(+). Functionally, pyrophosphatase that catalyzes the hydrolysis of nucleoside triphosphates to their monophosphate derivatives, with a high preference for the non-canonical purine nucleotides XTP (xanthosine triphosphate), dITP (deoxyinosine triphosphate) and ITP. Seems to function as a house-cleaning enzyme that removes non-canonical purine nucleotides from the nucleotide pool, thus preventing their incorporation into DNA/RNA and avoiding chromosomal lesions. This chain is dITP/XTP pyrophosphatase, found in Chlamydia muridarum (strain MoPn / Nigg).